We begin with the raw amino-acid sequence, 223 residues long: Pyridoxine/pyridoxamine 5'-phosphate oxidase (223 aa).

Substrate contacts are provided by residues 9–12 (RVGY) and Lys-76. Residues 71-76 (RTVLCK), 86-87 (FT), Lys-93, and Gln-115 each bind FMN. Substrate-binding residues include Tyr-133, Arg-137, and Ser-141. Residues 150–151 (QS) and Trp-196 each bind FMN. Residue 202–204 (RMH) participates in substrate binding. FMN is bound at residue Arg-206.

The protein belongs to the pyridoxamine 5'-phosphate oxidase family. As to quaternary structure, homodimer. FMN is required as a cofactor.

The enzyme catalyses pyridoxamine 5'-phosphate + O2 + H2O = pyridoxal 5'-phosphate + H2O2 + NH4(+). The catalysed reaction is pyridoxine 5'-phosphate + O2 = pyridoxal 5'-phosphate + H2O2. Its pathway is cofactor metabolism; pyridoxal 5'-phosphate salvage; pyridoxal 5'-phosphate from pyridoxamine 5'-phosphate: step 1/1. The protein operates within cofactor metabolism; pyridoxal 5'-phosphate salvage; pyridoxal 5'-phosphate from pyridoxine 5'-phosphate: step 1/1. In terms of biological role, catalyzes the oxidation of either pyridoxine 5'-phosphate (PNP) or pyridoxamine 5'-phosphate (PMP) into pyridoxal 5'-phosphate (PLP). The polypeptide is Pyridoxine/pyridoxamine 5'-phosphate oxidase (Rhodococcus jostii (strain RHA1)).